A 266-amino-acid polypeptide reads, in one-letter code: 15-hydroxyprostaglandin dehydrogenase [NAD(+)] (266 aa).

NAD(+)-binding positions include 12 to 20 (GAAQGIGRA), 36 to 37 (DW), 63 to 65 (CDV), and Asn-91. Substrate contacts are provided by Ser-138 and Gln-148. Residue Tyr-151 is the Proton acceptor of the active site. Residues 151-155 (YCASK) and 186-188 (VDT) each bind NAD(+).

The protein belongs to the short-chain dehydrogenases/reductases (SDR) family. As to quaternary structure, homodimer.

It is found in the cytoplasm. It catalyses the reaction prostaglandin E2 + NAD(+) = 15-oxoprostaglandin E2 + NADH + H(+). The catalysed reaction is (15S)-hydroxy-(5Z,8Z,11Z,13E)-eicosatetraenoate + NAD(+) = 15-oxo-(5Z,8Z,11Z,13E)-eicosatetraenoate + NADH + H(+). The enzyme catalyses (11R)-hydroxy-(5Z,8Z,12E,14Z)-eicosatetraenoate + NAD(+) = 11-oxo-(5Z,8Z,12E,14Z)-eicosatetraenoate + NADH + H(+). It carries out the reaction lipoxin A4 + NAD(+) = 15-oxo-(5S,6R)-dihydroxy-(7E,9E,11Z,13E)-eicosatetraenoate + NADH + H(+). It catalyses the reaction 15-oxo-(5S,6R)-dihydroxy-(7E,9E,11Z)-eicosatrienoate + NADH + H(+) = (5S,6R,15S)-trihydroxy-(7E,9E,11Z)-eicosatrienoate + NAD(+). The catalysed reaction is prostaglandin A1 + NAD(+) = 15-oxo-prostaglandin A1 + NADH + H(+). The enzyme catalyses prostaglandin E1 + NAD(+) = 15-oxoprostaglandin E1 + NADH + H(+). It carries out the reaction 14-hydroxy-(4Z,7Z,10Z,12E,16Z,19Z)-docosahexaenoate + NAD(+) = 14-oxo-(4Z,7Z,10Z,12E,16Z,19Z)-docosahexaenoate + NADH + H(+). It catalyses the reaction resolvin E1 + NAD(+) = 18-oxo-resolvin E1 + NADH + H(+). The catalysed reaction is resolvin D1 + NAD(+) = 8-oxoresolvin D1 + NADH + H(+). The enzyme catalyses resolvin D1 + NAD(+) = 17-oxoresolvin D1 + NADH + H(+). It carries out the reaction resolvin D2 + NAD(+) = 7-oxoresolvin D2 + NADH + H(+). It catalyses the reaction resolvin D2 + NAD(+) = 16-oxoresolvin D2 + NADH + H(+). Its function is as follows. Catalyzes the NAD-dependent dehydrogenation (oxidation) of a broad array of hydroxylated polyunsaturated fatty acids (mainly eicosanoids and docosanoids, including prostaglandins, lipoxins and resolvins), yielding their corresponding keto (oxo) metabolites. Decreases the levels of the pro-proliferative prostaglandins such as prostaglandin E2 (whose activity is increased in cancer because of an increase in the expression of cyclooxygenase 2) and generates oxo-fatty acid products that can profoundly influence cell function by abrogating pro-inflammatory cytokine expression. Converts resolvins E1, D1 and D2 to their oxo products, which represents a mode of resolvin inactivation. Resolvin E1 plays important roles during the resolution phase of acute inflammation, while resolvins D1 and D2 have a unique role in obesity-induced adipose inflammation. This chain is 15-hydroxyprostaglandin dehydrogenase [NAD(+)] (HPGD), found in Bos taurus (Bovine).